The chain runs to 167 residues: UPF0114 protein in repA1-repA2 intergenic region (167 aa).

A run of 3 helical transmembrane segments spans residues leucine 15–phenylalanine 35, leucine 53–valine 73, and isoleucine 136–isoleucine 156.

The protein belongs to the UPF0114 family.

The protein resides in the cell membrane. The protein is UPF0114 protein in repA1-repA2 intergenic region of Buchnera aphidicola subsp. Pterocomma populeum.